Here is a 599-residue protein sequence, read N- to C-terminus: ATP-dependent rRNA helicase SPB4 (599 aa).

A Q motif motif is present at residues 7-35 (WDTLDYTLQPWIRTAVDAMGYETMTPVQA). Residues 38–224 (IPLFARNKDV…KTGMRNPVKV (187 aa)) form the Helicase ATP-binding domain. 51-58 (SVTGSGKT) provides a ligand contact to ATP. Positions 172–175 (DEAD) match the DEAD box motif. Positions 248 to 415 (KLQLLLTLLN…GLPEIIRAWI (168 aa)) constitute a Helicase C-terminal domain. Residues 501–561 (QREKARKLAK…LKRKAIEEKL (61 aa)) adopt a coiled-coil conformation. Positions 559–599 (EKLIENSDDSDNEVETDWKDIVRQRKKKKTNSGMQGDFGDL) are disordered. The segment covering 564-573 (NSDDSDNEVE) has biased composition (acidic residues).

Belongs to the DEAD box helicase family. DDX55/SPB4 subfamily. Component of pre-60S ribosomal complexes.

The protein localises to the nucleus. It is found in the nucleolus. The catalysed reaction is ATP + H2O = ADP + phosphate + H(+). In terms of biological role, ATP-binding RNA helicase involved in the biogenesis of 60S ribosomal subunits. Binds 90S pre-ribosomal particles and dissociates from pre-60S ribosomal particles after processing of 27SB pre-rRNA. Required for the normal formation of 18S rRNA through the processing of pre-rRNAs at sites A0, A1 and A2, and the normal formation of 25S and 5.8S rRNAs through the processing of pre-rRNAs at sites C1 and C2. The polypeptide is ATP-dependent rRNA helicase SPB4 (Eremothecium gossypii (strain ATCC 10895 / CBS 109.51 / FGSC 9923 / NRRL Y-1056) (Yeast)).